We begin with the raw amino-acid sequence, 592 residues long: 2-succinyl-5-enolpyruvyl-6-hydroxy-3-cyclohexene-1-carboxylate synthase (592 aa).

The protein belongs to the TPP enzyme family. MenD subfamily. Homodimer. It depends on Mg(2+) as a cofactor. Mn(2+) is required as a cofactor. Requires thiamine diphosphate as cofactor.

The catalysed reaction is isochorismate + 2-oxoglutarate + H(+) = 5-enolpyruvoyl-6-hydroxy-2-succinyl-cyclohex-3-ene-1-carboxylate + CO2. Its pathway is quinol/quinone metabolism; 1,4-dihydroxy-2-naphthoate biosynthesis; 1,4-dihydroxy-2-naphthoate from chorismate: step 2/7. It participates in quinol/quinone metabolism; menaquinone biosynthesis. In terms of biological role, catalyzes the thiamine diphosphate-dependent decarboxylation of 2-oxoglutarate and the subsequent addition of the resulting succinic semialdehyde-thiamine pyrophosphate anion to isochorismate to yield 2-succinyl-5-enolpyruvyl-6-hydroxy-3-cyclohexene-1-carboxylate (SEPHCHC). In Leifsonia xyli subsp. xyli (strain CTCB07), this protein is 2-succinyl-5-enolpyruvyl-6-hydroxy-3-cyclohexene-1-carboxylate synthase.